A 130-amino-acid polypeptide reads, in one-letter code: Flagellar assembly factor FliW (130 aa).

Belongs to the FliW family. As to quaternary structure, interacts with translational regulator CsrA and flagellin(s).

It localises to the cytoplasm. Its function is as follows. Acts as an anti-CsrA protein, binds CsrA and prevents it from repressing translation of its target genes, one of which is flagellin. Binds to flagellin and participates in the assembly of the flagellum. The sequence is that of Flagellar assembly factor FliW from Borrelia turicatae (strain 91E135).